A 67-amino-acid polypeptide reads, in one-letter code: Beta-defensin 123 (67 aa).

Residues 1 to 20 (MKLLLLTLTVLLLLSQLTPG) form the signal peptide. Disulfide bonds link cysteine 25–cysteine 52, cysteine 32–cysteine 46, and cysteine 36–cysteine 53.

It belongs to the beta-defensin family.

Its subcellular location is the secreted. Functionally, has antibacterial activity. In Pongo pygmaeus (Bornean orangutan), this protein is Beta-defensin 123 (DEFB123).